We begin with the raw amino-acid sequence, 217 residues long: Ribonuclease T (217 aa).

The Exonuclease domain maps to 20 to 194 (VVIDIETAGF…YDTQQTANLF (175 aa)). Residues Asp23, Glu25, His181, and Asp186 each contribute to the Mg(2+) site. His181 serves as the catalytic Proton donor/acceptor.

Belongs to the RNase T family. In terms of assembly, homodimer. Mg(2+) serves as cofactor.

Its function is as follows. Trims short 3' overhangs of a variety of RNA species, leaving a one or two nucleotide 3' overhang. Responsible for the end-turnover of tRNA: specifically removes the terminal AMP residue from uncharged tRNA (tRNA-C-C-A). Also appears to be involved in tRNA biosynthesis. The sequence is that of Ribonuclease T from Buchnera aphidicola subsp. Baizongia pistaciae (strain Bp).